Here is a 448-residue protein sequence, read N- to C-terminus: Trigger factor (448 aa).

In terms of domain architecture, PPIase FKBP-type spans 167 to 253; it reads GSIVRVDFVE…VKDIKRRDIP (87 aa).

This sequence belongs to the FKBP-type PPIase family. Tig subfamily.

The protein resides in the cytoplasm. The enzyme catalyses [protein]-peptidylproline (omega=180) = [protein]-peptidylproline (omega=0). In terms of biological role, involved in protein export. Acts as a chaperone by maintaining the newly synthesized protein in an open conformation. Functions as a peptidyl-prolyl cis-trans isomerase. The protein is Trigger factor of Borrelia recurrentis (strain A1).